Here is an 803-residue protein sequence, read N- to C-terminus: Bromodomain-containing protein 2 (803 aa).

Position 1 is an N-acetylmethionine (methionine 1). Threonine 6 carries the post-translational modification Phosphothreonine. Position 37 is a phosphoserine (serine 37). A disordered region spans residues 53–73; the sequence is ALQLTPANPPPPEVSNPKKPG. The Bromo 1 domain maps to 74–180; the sequence is RVTNQLQYLH…KIFLQKVASM (107 aa). A protein-binding residues include aspartate 112, tyrosine 155, asparagine 156, lysine 157, aspartate 160, and aspartate 161. Disordered regions lie at residues 268-348, 456-652, and 739-803; these read PPAQ…KLSE, EPLE…KRQL, and EKRL…SDSG. The segment covering 285–298 has biased composition (low complexity); it reads TTTPTPTAILAPGS. A phosphoserine mark is found at serine 298 and serine 301. Over residues 316–332 the composition is skewed to basic and acidic residues; it reads VRRESGRPIKPPRKDLP. The region spanning 344-453 is the Bromo 2 domain; sequence GKLSEQLKHC…DVFEFRYAKM (110 aa). Acidic residues predominate over residues 481-515; it reads SSEESSSESSSEEEEEEDEDEEEEEEESESSDSEE. Residues 545-567 show a composition bias toward basic residues; the sequence is KPKRKREKKEKKKKRKAEKHRGR. Residues 556-560 carry the Nuclear localization signal motif; the sequence is KKKRK. Over residues 623-632 the composition is skewed to low complexity; sequence KTAPPALPAG. Residues 634-716 enclose the NET domain; sequence DSEEEEESRP…SCLRKKPRKP (83 aa). Serine 635 is subject to Phosphoserine. Basic and acidic residues predominate over residues 641–652; the sequence is SRPMSYDEKRQL. A compositionally biased stretch (low complexity) spans 777–797; sequence SASSSSSDSSSSSSSSSSSDT.

The protein belongs to the BET family. Homodimer. Interacts with E2F1. Interacts with (acetylated) STAT3; promoting STAT3 recruitment to chromatin. Interacts with CTCF; promoting BRD2 recruitment to chromatin.

It is found in the nucleus. The protein resides in the chromosome. In terms of biological role, chromatin reader protein that specifically recognizes and binds histone H4 acetylated at 'Lys-5' and 'Lys-12' (H4K5ac and H4K12ac, respectively), thereby controlling gene expression and remodeling chromatin structures. Recruits transcription factors and coactivators to target gene sites, and activates RNA polymerase II machinery for transcriptional elongation. Plays a key role in genome compartmentalization via its association with CTCF and cohesin: recruited to chromatin by CTCF and promotes formation of topologically associating domains (TADs) via its ability to bind acetylated histones, contributing to CTCF boundary formation and enhancer insulation. Also recognizes and binds acetylated non-histone proteins, such as STAT3. Involved in inflammatory response by regulating differentiation of naive CD4(+) T-cells into T-helper Th17: recognizes and binds STAT3 acetylated at 'Lys-87', promoting STAT3 recruitment to chromatin. In addition to acetylated lysines, also recognizes and binds lysine residues on histones that are both methylated and acetylated on the same side chain to form N6-acetyl-N6-methyllysine (Kacme), an epigenetic mark of active chromatin associated with increased transcriptional initiation. Specifically binds histone H4 acetyl-methylated at 'Lys-5' and 'Lys-12' (H4K5acme and H4K12acme, respectively). The polypeptide is Bromodomain-containing protein 2 (BRD2) (Bos taurus (Bovine)).